Consider the following 188-residue polypeptide: Ion-translocating oxidoreductase complex subunit B (188 aa).

The segment at 1 to 23 (MIEAAVSMSALGLGLGLLLGVAA) is hydrophobic. A 4Fe-4S domain is found at 29 to 88 (ESPPILDAIEGILPGTNCGACGYPGCRGLAEAMSEGAAPVTACAPGGRDVALALAAIVET). The [4Fe-4S] cluster site is built by C46, C49, C54, C71, C113, C116, C119, C123, C143, C146, C149, and C153. 4Fe-4S ferredoxin-type domains follow at residues 104–133 (TVAF…GANR) and 134–163 (QIHT…ARVK).

Belongs to the 4Fe4S bacterial-type ferredoxin family. RnfB subfamily. The complex is composed of six subunits: RnfA, RnfB, RnfC, RnfD, RnfE and RnfG. [4Fe-4S] cluster serves as cofactor.

The protein localises to the cellular chromatophore membrane. Part of a membrane-bound complex that couples electron transfer with translocation of ions across the membrane. This Cereibacter sphaeroides (strain ATCC 17029 / ATH 2.4.9) (Rhodobacter sphaeroides) protein is Ion-translocating oxidoreductase complex subunit B.